We begin with the raw amino-acid sequence, 311 residues long: Iron-binding protein YfeA (311 aa).

The signal sequence occupies residues 1–31; it reads MIERLNSPFLRAAALFTIVAFSSLISTAALA. The Fe(2+) site is built by H76, H141, E207, and D282.

It belongs to the bacterial solute-binding protein 9 family. Monomer.

The protein localises to the periplasm. Part of the ATP-binding cassette (ABC) transport system YfeABC involved in iron import. Binds iron with high affinity and specificity and delivers it to the membrane permease for translocation into the cytoplasm. Also binds Mn(2+) and Zn(2+). This is Iron-binding protein YfeA (yfeA) from Yersinia pestis.